Here is a 78-residue protein sequence, read N- to C-terminus: Protein SlyX homolog (78 aa).

The protein belongs to the SlyX family.

This chain is Protein SlyX homolog, found in Xanthomonas axonopodis pv. citri (strain 306).